The primary structure comprises 88 residues: Small ribosomal subunit protein bS18 (88 aa).

Belongs to the bacterial ribosomal protein bS18 family. Part of the 30S ribosomal subunit. Forms a tight heterodimer with protein bS6.

Its function is as follows. Binds as a heterodimer with protein bS6 to the central domain of the 16S rRNA, where it helps stabilize the platform of the 30S subunit. This Syntrophus aciditrophicus (strain SB) protein is Small ribosomal subunit protein bS18.